Here is a 947-residue protein sequence, read N- to C-terminus: Protein NLP8 (947 aa).

Disordered regions lie at residues 114 to 135, 509 to 533, and 550 to 591; these read RSSAQEMNSQFHRSSDSDELSG, STKKEGTKPGFRSSDMSNFPQTTSS, and SMFS…EKNV. Positions 126-135 are enriched in basic and acidic residues; sequence RSSDSDELSG. Composition is skewed to polar residues over residues 522 to 533 and 550 to 572; these read SDMSNFPQTTSS and SMFSGMSSDKENSITVSQGTLEQ. A compositionally biased stretch (basic and acidic residues) spans 573–587; the sequence is DVSKARTPEKKKSTT. An RWP-RK domain is found at 577–671; that stretch reads ARTPEKKKST…LDSVQGVEGG (95 aa). A coiled-coil region spans residues 646-666; it reads RKINKVNRSLRKIQTVLDSVQ. Positions 805-815 are enriched in low complexity; it reads SCSISDSSNGS. Residues 805-828 are disordered; the sequence is SCSISDSSNGSGAVLRGSSSTSME. Residues 847-929 enclose the PB1 domain; that stretch reads TLIVKASYRE…HSVKFLVRDL (83 aa).

Its subcellular location is the nucleus. In terms of biological role, probable transcription factor. This Arabidopsis thaliana (Mouse-ear cress) protein is Protein NLP8 (NLP8).